Consider the following 198-residue polypeptide: MDKKPCNSHDVEVRKGPWTMEEDLILINFISNHGEGVWNTIARSAGLKRTGKSCRLRWLNYLRPDVRRGNITPEEQLLIMELHAKWGNRWSKIAKHLPGRTDNEIKNYWNRTRIQKHIKQAEASFIGHINPEHSNEQASTSLLSSSCHADHAVESYSSSFNGNMGNNVQYPNHFPTESNDYFWSMEDLWSMQLPNNGG.

HTH myb-type domains are found at residues 10-62 and 63-117; these read DVEV…LNYL and RPDV…IQKH. 2 DNA-binding regions (H-T-H motif) span residues 38–62 and 90–113; these read WNTI…LNYL and WSKI…NRTR.

Expressed only in flowers.

The protein resides in the nucleus. Its function is as follows. Transcription factor. This Antirrhinum majus (Garden snapdragon) protein is Myb-related protein 340.